The chain runs to 370 residues: Quinolinate synthase (370 aa).

Iminosuccinate contacts are provided by histidine 62 and serine 83. Cysteine 128 is a [4Fe-4S] cluster binding site. Iminosuccinate contacts are provided by residues tyrosine 154–asparagine 156 and serine 171. Position 215 (cysteine 215) interacts with [4Fe-4S] cluster. Residues histidine 241–glutamate 243 and threonine 258 each bind iminosuccinate. Cysteine 312 serves as a coordination point for [4Fe-4S] cluster.

This sequence belongs to the quinolinate synthase family. Type 1 subfamily. [4Fe-4S] cluster serves as cofactor.

Its subcellular location is the cytoplasm. The enzyme catalyses iminosuccinate + dihydroxyacetone phosphate = quinolinate + phosphate + 2 H2O + H(+). It functions in the pathway cofactor biosynthesis; NAD(+) biosynthesis; quinolinate from iminoaspartate: step 1/1. Functionally, catalyzes the condensation of iminoaspartate with dihydroxyacetone phosphate to form quinolinate. This chain is Quinolinate synthase, found in Neisseria meningitidis serogroup B (strain ATCC BAA-335 / MC58).